Here is a 195-residue protein sequence, read N- to C-terminus: Small ribosomal subunit protein uS4c (195 aa).

The 62-residue stretch at 82–143 (MRLDNILFRL…KQRSKALIQN (62 aa)) folds into the S4 RNA-binding domain.

Belongs to the universal ribosomal protein uS4 family. As to quaternary structure, part of the 30S ribosomal subunit. Contacts protein S5. The interaction surface between S4 and S5 is involved in control of translational fidelity.

It is found in the plastid. It localises to the chloroplast. In terms of biological role, one of the primary rRNA binding proteins, it binds directly to 16S rRNA where it nucleates assembly of the body of the 30S subunit. With S5 and S12 plays an important role in translational accuracy. This chain is Small ribosomal subunit protein uS4c (rps4), found in Watsonia angusta.